The sequence spans 142 residues: ATP synthase epsilon chain (142 aa).

The protein belongs to the ATPase epsilon chain family. In terms of assembly, F-type ATPases have 2 components, CF(1) - the catalytic core - and CF(0) - the membrane proton channel. CF(1) has five subunits: alpha(3), beta(3), gamma(1), delta(1), epsilon(1). CF(0) has three main subunits: a, b and c.

The protein localises to the cell membrane. Functionally, produces ATP from ADP in the presence of a proton gradient across the membrane. In Lactiplantibacillus plantarum (strain ATCC BAA-793 / NCIMB 8826 / WCFS1) (Lactobacillus plantarum), this protein is ATP synthase epsilon chain.